We begin with the raw amino-acid sequence, 821 residues long: Leucine--tRNA ligase (821 aa).

Positions 44–54 (PYPSGRIHMGH) match the 'HIGH' region motif. The 'KMSKS' region motif lies at 589 to 593 (KMSKS). Lys592 contributes to the ATP binding site.

The protein belongs to the class-I aminoacyl-tRNA synthetase family.

The protein localises to the cytoplasm. It carries out the reaction tRNA(Leu) + L-leucine + ATP = L-leucyl-tRNA(Leu) + AMP + diphosphate. This is Leucine--tRNA ligase from Campylobacter concisus (strain 13826).